The chain runs to 198 residues: Single-stranded DNA cytosine deaminase (198 aa).

A Bipartite nuclear localization signal motif is present at residues 1–30; that stretch reads MDSLLMKQRKFLYHFKNVRWAKGRHETYLC. The interval 2–26 is interaction with SUPT6H; it reads DSLLMKQRKFLYHFKNVRWAKGRHE. The CMP/dCMP-type deaminase domain maps to 23–129; it reads GRHETYLCYV…KAEPEGLRRL (107 aa). Position 27 is a phosphothreonine; by PKA (T27). A Phosphoserine; by PKA modification is found at S38. Positions 39–42 are important for interaction with CTNNBL1; it reads ATSF. H56 provides a ligand contact to Zn(2+). Residue E58 is the Proton donor of the active site. Zn(2+) is bound by residues C87 and C90. The segment at 88–116 is required for interaction with RNF126; the sequence is YDCARHVADFLRGYPNLSLRIFAARLYFC. The Nuclear export signal signature appears at 183–198; that stretch reads LYEVDDLRDAFRTLGL.

It belongs to the cytidine and deoxycytidylate deaminase family. In terms of assembly, interacts with CTNNBL1; the interaction is important for the immunoglobulin switch activity of AICDA. Interacts (via its NLS) with KPNA1. Interacts with PKA/PRKACA and PRKAR1A/PKR1. Interacts with SUPT6H, TRIM28 and NCL. Directly interacts with MCM3AP; this interaction may favor AICDA recruitment to immunoglobulin variable region genes, hence promoting somatic hypermutations. The cofactor is Zn(2+). Ser-38 is the major site whereas Thr-27 is the minor site of phosphorylation. Phosphorylation regulates its class-switch recombination activity. In terms of processing, probably monoubiquitinated on several residues by RNF126. As to expression, expressed in thymus, lung, spleen, kidney, small intestine, lymph node and tonsil.

It is found in the nucleus. It localises to the cytoplasm. The catalysed reaction is a 2'-deoxycytidine in single-stranded DNA + H2O + H(+) = a 2'-deoxyuridine in single-stranded DNA + NH4(+). In terms of biological role, single-stranded DNA-specific cytidine deaminase. Involved in somatic hypermutation (SHM), gene conversion, and class-switch recombination (CSR) in B-lymphocytes by deaminating C to U during transcription of Ig-variable (V) and Ig-switch (S) region DNA. Required for several crucial steps of B-cell terminal differentiation necessary for efficient antibody responses. May also play a role in the epigenetic regulation of gene expression by participating in DNA demethylation. The protein is Single-stranded DNA cytosine deaminase (AICDA) of Canis lupus familiaris (Dog).